Consider the following 134-residue polypeptide: Large ribosomal subunit protein uL22 (134 aa).

Belongs to the universal ribosomal protein uL22 family. As to quaternary structure, part of the 50S ribosomal subunit.

Its function is as follows. This protein binds specifically to 23S rRNA; its binding is stimulated by other ribosomal proteins, e.g. L4, L17, and L20. It is important during the early stages of 50S assembly. It makes multiple contacts with different domains of the 23S rRNA in the assembled 50S subunit and ribosome. In terms of biological role, the globular domain of the protein is located near the polypeptide exit tunnel on the outside of the subunit, while an extended beta-hairpin is found that lines the wall of the exit tunnel in the center of the 70S ribosome. The protein is Large ribosomal subunit protein uL22 of Karelsulcia muelleri (strain GWSS) (Sulcia muelleri).